The chain runs to 211 residues: MKNVDDLIDSAAELAEHGLSKGEIADELNVSRETASWLVERAGGNHTDTETAATTSTADIHVDWSALGRDSTRLRYAASAMADLLAKQGEEVDLTVGIEKAGAPLATAVANQLDTDLGTYAPAKHQWDEGDIDEQGGGFSRNFAAIRNRDCYVVDDIITSGTTMRESIDAIREQGGEPIACVVLVDKRGYDEIDGVPVYSLVDVVRVDREE.

Belongs to the purine/pyrimidine phosphoribosyltransferase family. GfcR subfamily.

Functionally, DNA-binding transcriptional regulator that functions as a regulator of central sugar catabolic pathways. The sequence is that of Transcriptional regulator GfcR from Halorubrum lacusprofundi (strain ATCC 49239 / DSM 5036 / JCM 8891 / ACAM 34).